Consider the following 269-residue polypeptide: Ribonuclease HII (269 aa).

The RNase H type-2 domain occupies 83-269 (YLIAGVDEVG…HRMSFLTNIL (187 aa)). Residues Asp-89, Glu-90, and Asp-185 each coordinate a divalent metal cation.

Belongs to the RNase HII family. Mn(2+) serves as cofactor. Mg(2+) is required as a cofactor.

It is found in the cytoplasm. It carries out the reaction Endonucleolytic cleavage to 5'-phosphomonoester.. Functionally, endonuclease that specifically degrades the RNA of RNA-DNA hybrids. The polypeptide is Ribonuclease HII (Clostridium botulinum (strain Loch Maree / Type A3)).